The primary structure comprises 217 residues: 3,4-dihydroxy-2-butanone 4-phosphate synthase (217 aa).

Residues 37–38 (RE), D42, 150–154 (RRGHT), and E174 contribute to the D-ribulose 5-phosphate site. Position 38 (E38) interacts with Mg(2+). H153 provides a ligand contact to Mg(2+).

The protein belongs to the DHBP synthase family. In terms of assembly, homodimer. It depends on Mg(2+) as a cofactor. Mn(2+) is required as a cofactor.

The catalysed reaction is D-ribulose 5-phosphate = (2S)-2-hydroxy-3-oxobutyl phosphate + formate + H(+). It functions in the pathway cofactor biosynthesis; riboflavin biosynthesis; 2-hydroxy-3-oxobutyl phosphate from D-ribulose 5-phosphate: step 1/1. In terms of biological role, catalyzes the conversion of D-ribulose 5-phosphate to formate and 3,4-dihydroxy-2-butanone 4-phosphate. The sequence is that of 3,4-dihydroxy-2-butanone 4-phosphate synthase from Shewanella sediminis (strain HAW-EB3).